A 91-amino-acid polypeptide reads, in one-letter code: UPF0250 protein NGO_0791 (91 aa).

The protein belongs to the UPF0250 family.

This chain is UPF0250 protein NGO_0791, found in Neisseria gonorrhoeae (strain ATCC 700825 / FA 1090).